The following is a 307-amino-acid chain: Putative S-adenosyl-L-methionine-dependent methyltransferase Mflv_5025 (307 aa).

Residues Asp-130 and 159–160 (DL) each bind S-adenosyl-L-methionine.

This sequence belongs to the UPF0677 family.

Its function is as follows. Exhibits S-adenosyl-L-methionine-dependent methyltransferase activity. This chain is Putative S-adenosyl-L-methionine-dependent methyltransferase Mflv_5025, found in Mycolicibacterium gilvum (strain PYR-GCK) (Mycobacterium gilvum (strain PYR-GCK)).